Consider the following 33-residue polypeptide: Brevinin-2CDYb (33 aa).

Cys-27 and Cys-33 are oxidised to a cystine.

Belongs to the frog skin active peptide (FSAP) family. Brevinin subfamily. As to expression, expressed by the skin glands.

Its subcellular location is the secreted. Functionally, antimicrobial peptide. The polypeptide is Brevinin-2CDYb (Rana dybowskii (Dybovsky's frog)).